A 375-amino-acid polypeptide reads, in one-letter code: Chaperone protein DnaJ (375 aa).

The 66-residue stretch at 4–69 (DLYETLGVQK…QKRAAYDRYG (66 aa)) folds into the J domain. A CR-type zinc finger spans residues 133–211 (GKTAQIRVPT…CHGQGRVVEE (79 aa)). Zn(2+) contacts are provided by C146, C149, C163, C166, C185, C188, C199, and C202. CXXCXGXG motif repeat units follow at residues 146–153 (CDVCTGTG), 163–170 (CGTCQGTG), 185–192 (CPTCGGRG), and 199–206 (CTKCHGQG).

This sequence belongs to the DnaJ family. In terms of assembly, homodimer. Requires Zn(2+) as cofactor.

Its subcellular location is the cytoplasm. Its function is as follows. Participates actively in the response to hyperosmotic and heat shock by preventing the aggregation of stress-denatured proteins and by disaggregating proteins, also in an autonomous, DnaK-independent fashion. Unfolded proteins bind initially to DnaJ; upon interaction with the DnaJ-bound protein, DnaK hydrolyzes its bound ATP, resulting in the formation of a stable complex. GrpE releases ADP from DnaK; ATP binding to DnaK triggers the release of the substrate protein, thus completing the reaction cycle. Several rounds of ATP-dependent interactions between DnaJ, DnaK and GrpE are required for fully efficient folding. Also involved, together with DnaK and GrpE, in the DNA replication of plasmids through activation of initiation proteins. In Sinorhizobium medicae (strain WSM419) (Ensifer medicae), this protein is Chaperone protein DnaJ.